The sequence spans 162 residues: MEKIFERLMYASRWIMAPIYLGLSLVLLGLGIKFFQEIFHILPIIFEMTEVDLVLVTLSLIDITLVGGLIVMVMFSGYENFVSQLDVGEDSEKLSWLGKLDSGSLKNKVAASIVAISSIHLLKIFMDVKNIDNDKIMWYLLIHITFVVSAFAMGYLDKMTRK.

4 helical membrane-spanning segments follow: residues 15-35 (IMAP…IKFF), 53-73 (LVLV…IVMV), 108-128 (KVAA…FMDV), and 136-156 (IMWY…MGYL).

It belongs to the UPF0114 family.

It localises to the cell membrane. The chain is UPF0114 protein Shewmr4_0646 from Shewanella sp. (strain MR-4).